We begin with the raw amino-acid sequence, 252 residues long: D-aminoacyl-tRNA deacylase (252 aa).

It belongs to the DtdA deacylase family. In terms of assembly, monomer. Requires Zn(2+) as cofactor.

It carries out the reaction a D-aminoacyl-tRNA + H2O = a tRNA + a D-alpha-amino acid + H(+). The catalysed reaction is glycyl-tRNA(Ala) + H2O = tRNA(Ala) + glycine + H(+). In terms of biological role, D-aminoacyl-tRNA deacylase with broad substrate specificity. By recycling D-aminoacyl-tRNA to D-amino acids and free tRNA molecules, this enzyme counteracts the toxicity associated with the formation of D-aminoacyl-tRNA entities in vivo. The polypeptide is D-aminoacyl-tRNA deacylase (Pyrobaculum arsenaticum (strain DSM 13514 / JCM 11321 / PZ6)).